A 771-amino-acid chain; its full sequence is Transcription factor TAS2 (771 aa).

The segment at 33-53 (RSRAESASGPQQPSRRQPQTS) is disordered. Low complexity predominate over residues 42 to 51 (PQQPSRRQPQ). Positions 54–80 (CDLCRSRKIKCDRGTPCGNCRTRGLAC) form a DNA-binding region, zn(2)-C6 fungal-type. The segment at 125–150 (AVGGSGNAENGAHGDATPRVPLSGLE) is disordered.

The protein resides in the nucleus. Its function is as follows. Transcription factor; part of the gene cluster that mediates the biosynthesis of the toxin tenuazonic acid (TeA), an inhibitor of protein biosynthesis on ribosomes by suppressing the release of new protein. Directly regulates the expression of the hybrid PKS-NRPS synthetase TAS1 and the subsequent production of TeA. In Pyricularia oryzae (strain 70-15 / ATCC MYA-4617 / FGSC 8958) (Rice blast fungus), this protein is Transcription factor TAS2.